The sequence spans 929 residues: Isoleucine--tRNA ligase (929 aa).

Positions 57 to 67 match the 'HIGH' region motif; it reads PYANGNIHVGH. E554 serves as a coordination point for L-isoleucyl-5'-AMP. The 'KMSKS' region motif lies at 595–599; the sequence is KMSKS. K598 is an ATP binding site. C888, C891, C908, and C911 together coordinate Zn(2+).

This sequence belongs to the class-I aminoacyl-tRNA synthetase family. IleS type 1 subfamily. Monomer. Zn(2+) serves as cofactor.

It is found in the cytoplasm. The enzyme catalyses tRNA(Ile) + L-isoleucine + ATP = L-isoleucyl-tRNA(Ile) + AMP + diphosphate. In terms of biological role, catalyzes the attachment of isoleucine to tRNA(Ile). As IleRS can inadvertently accommodate and process structurally similar amino acids such as valine, to avoid such errors it has two additional distinct tRNA(Ile)-dependent editing activities. One activity is designated as 'pretransfer' editing and involves the hydrolysis of activated Val-AMP. The other activity is designated 'posttransfer' editing and involves deacylation of mischarged Val-tRNA(Ile). The protein is Isoleucine--tRNA ligase of Streptococcus thermophilus (strain ATCC BAA-491 / LMD-9).